Reading from the N-terminus, the 190-residue chain is MSESSSVPTEREQLLNRLATLAYRRGDFTLASGRKSEHYVNCKPVSLSGSGLALISRAMLTHVEADARAVAGLTLGADPLVSGVAMAAADQSRELDALIVRKEAKGHGTGAWLEGPLPAPGTLITVLEDVVTTGGSSLKAVRQLRDAGYKVTRVVTIVDREEGGDAAMAADNLELISLYKLSEIAAFVPA.

Residues R101, K102, K105, H107, and 128-136 (EDVVTTGGS) each bind 5-phospho-alpha-D-ribose 1-diphosphate. Orotate is bound by residues T132 and R160.

This sequence belongs to the purine/pyrimidine phosphoribosyltransferase family. PyrE subfamily. As to quaternary structure, homodimer. Requires Mg(2+) as cofactor.

It carries out the reaction orotidine 5'-phosphate + diphosphate = orotate + 5-phospho-alpha-D-ribose 1-diphosphate. Its pathway is pyrimidine metabolism; UMP biosynthesis via de novo pathway; UMP from orotate: step 1/2. In terms of biological role, catalyzes the transfer of a ribosyl phosphate group from 5-phosphoribose 1-diphosphate to orotate, leading to the formation of orotidine monophosphate (OMP). The protein is Orotate phosphoribosyltransferase of Synechococcus sp. (strain CC9605).